A 518-amino-acid polypeptide reads, in one-letter code: MAENNAQNKAKLISETRRRFEAEYVTEKSEKYDSRDVERLQQDDNWVESYLYWRHNVVDETLKMLDESFQWRKEFSVNDLSESSIPRWLLELGGIYLHGYDKEGNKLFWIRVKYHIKDQKTIMDKKKLIAFWLERYAKRENGKPITVMFDMSETGLNSIDMDFVRFIINCFKVYYPKYLSKIVIFDMPWIMNAAFKIVKSWLGPEAVSLLKFTSKNEIQEYVSVEYLPPHMGGTDPFKYSYPPLVDDDFQTPLCENGPIASEDETSSKEDIEGDGKETLETISNEEPPALSEKSNPTESVSKKDENEKVDSKTKTFKKPLSVFKGPLLHISPAEELYFGSIESGEKKTLIVLTNVTKNIVAFKVRTTAPEKYRVKPSNSSCDPGASIDIIVSPHGGLTVSAQDRFLIMAAEMEQSSGTGPAELSQFWKEVPRNKVMEHRLRCHTVESSKPNSLMLKDSISTMSDKTSEDLYLQLNRLLESNRKLEDQLQRSIWFQQLLLALTMVLLDFVVSFFYSLYN.

Over Met1 to Gln496 the chain is Cytoplasmic. The CRAL-TRIO domain occupies Ile85 to Tyr239. The disordered stretch occupies residues Pro252–Lys312. Composition is skewed to basic and acidic residues over residues Thr265–Leu279 and Val300–Lys312. The MSP domain maps to Leu327 to Val445. The tract at residues Arg365–Thr366 is required for FFAT motif binding and phosphorylated FFAT motif binding. The helical; Anchor for type IV membrane protein transmembrane segment at Leu497–Asn518 threads the bilayer.

Homooligomer. Interacts (via MSP domain) with STARD3NL (via FFAT motif), RMDN3 (via FFAT motif), OSBPL1A (via FFAT motif) and CERT1 (via FFAT motif). Interacts (via MSP domain) with STARD3 (via phosphorylated FFAT motif); this interaction depends on the critical phosphorylation of STARD3 on 'Ser-209'. Interacts with RB1CC1 (via phosphorylated FFAT motif), MIGA2 (via phosphorylated FFAT motif) and OSBPL1A (via FFAT motif).

The protein localises to the endoplasmic reticulum membrane. Endoplasmic reticulum-anchored protein that mediates the formation of contact sites between the endoplasmic (ER) and endosomes, mitochondria or Golgi through interaction with conventional- and phosphorylated-FFAT-containing organelle-bound proteins. In addition, forms endoplasmic reticulum (ER)-lipid droplets (LDs) contacts through a direct protein-membrane interaction and participates in LDs homeostasis. The attachment mechanism involves an amphipathic helix that has an affinity for lipid packing defects present at the surface of LDs. Promotes migration of primary monocytes and neutrophils, in response to various chemokines. The chain is Motile sperm domain-containing protein 2 from Mus musculus (Mouse).